Reading from the N-terminus, the 213-residue chain is Immunoglobulin lambda-like polypeptide 1 (213 aa).

An N-terminal signal peptide occupies residues 1 to 37 (MRPGTGQGGLEAPGEPGPNLRQRWPLLLLGLAVVTHG). Residues 97–108 (VFGSGTQLTVLS) form a j region region. The tract at residues 109–213 (QPKATPSVTL…EKTVAPAECS (105 aa)) is c region. Residues 114 to 208 (PSVTLFPPSS…EGSTVEKTVA (95 aa)) form the Ig-like C1-type domain. A disulfide bridge connects residues Cys135 and Cys194.

Associates non-covalently with VPREB1. Interacts with SYNV1/HRD1 (via N-terminus); this interaction leads to increased IGLL1 ubiquitination and degradation in pre-B cells, possibly through a lysosomal, not proteasomal, pathway. Expressed only in pre-B-cells and a special B-cell line (which is surface Ig negative).

The protein localises to the endoplasmic reticulum. Its subcellular location is the secreted. Critical for B-cell development. The polypeptide is Immunoglobulin lambda-like polypeptide 1 (IGLL1) (Homo sapiens (Human)).